The primary structure comprises 386 residues: Acetate kinase (386 aa).

A Mg(2+)-binding site is contributed by asparagine 7. An ATP-binding site is contributed by lysine 14. Arginine 78 contacts substrate. Aspartate 135 functions as the Proton donor/acceptor in the catalytic mechanism. ATP-binding positions include 195–199 (HLGNG), 268–270 (DMR), and 316–320 (GIGEN). Glutamate 370 is a binding site for Mg(2+).

This sequence belongs to the acetokinase family. In terms of assembly, homodimer. Mg(2+) serves as cofactor. It depends on Mn(2+) as a cofactor.

Its subcellular location is the cytoplasm. It carries out the reaction acetate + ATP = acetyl phosphate + ADP. It participates in metabolic intermediate biosynthesis; acetyl-CoA biosynthesis; acetyl-CoA from acetate: step 1/2. In terms of biological role, catalyzes the formation of acetyl phosphate from acetate and ATP. Can also catalyze the reverse reaction. The sequence is that of Acetate kinase from Arthrobacter sp. (strain FB24).